The following is a 143-amino-acid chain: Transcription antitermination protein NusB (143 aa).

The protein belongs to the NusB family.

In terms of biological role, involved in transcription antitermination. Required for transcription of ribosomal RNA (rRNA) genes. Binds specifically to the boxA antiterminator sequence of the ribosomal RNA (rrn) operons. This chain is Transcription antitermination protein NusB, found in Anaeromyxobacter sp. (strain Fw109-5).